The primary structure comprises 451 residues: Protein SAR DEFICIENT 1 (451 aa).

Residues Asp149–His270 form a DNA-binding region.

Belongs to the plant ACBP60 protein family. In terms of assembly, (Microbial infection) Interacts with V.dahliae SCP41.

The protein localises to the nucleus. Its function is as follows. Transcription activator that binds DNA in a sequence-specific manner, 5'-GAAATTTTGG-3', to promote the expression of target genes. Recruited to the promoter of ICS1 and other defense-related genes (e.g. PR1 and SID2) in response to both biotic (e.g. Pseudomonas syringae pv. maculicola ES4326) and abiotic stresses (e.g. UV-B), thus triggering slow defense responses by stimulating salicylic acid (SA) biosynthesis. Required for basal and systemic acquired resistance to P.syringae pv. maculicola and Hyaloperonospora arabidopsidis. The polypeptide is Protein SAR DEFICIENT 1 (Arabidopsis thaliana (Mouse-ear cress)).